The sequence spans 618 residues: Glutathione-regulated potassium-efflux system protein (618 aa).

12 helical membrane-spanning segments follow: residues 6–26, 32–52, 55–75, 94–114, 118–138, 152–172, 186–206, 227–247, 274–294, 298–318, 336–356, and 362–382; these read NPEL…VPLF, GSVL…FGIV, PTAV…IIGL, LLQV…LLGL, VSFI…MQSL, VIST…SVAF, WVSI…GKWL, ALLV…SMAM, GLLL…HLVF, ILLL…VYII, MAHG…AEVI, and ATFT…AQIA. In terms of domain architecture, RCK N-terminal spans 409–525; that stretch reads EDNVLVIGFG…LIKQDVDFIV (117 aa).

This sequence belongs to the monovalent cation:proton antiporter 2 (CPA2) transporter (TC 2.A.37) family.

The protein localises to the cell inner membrane. In terms of biological role, transport system that facilitate potassium-efflux, possibly by potassium-proton antiport. This chain is Glutathione-regulated potassium-efflux system protein (kefBC), found in Haemophilus influenzae (strain ATCC 51907 / DSM 11121 / KW20 / Rd).